A 259-amino-acid chain; its full sequence is uncharacterized protein (259 aa).

The ABC transporter domain maps to 4 to 243; sequence INLKNINLTR…KILTDFYQEK (240 aa). An ATP-binding site is contributed by 36–43; it reads GLNGSGKS.

This sequence belongs to the ABC transporter superfamily.

This is an uncharacterized protein from Lactococcus lactis subsp. lactis (strain IL1403) (Streptococcus lactis).